A 654-amino-acid chain; its full sequence is Cytochrome B pre-mRNA-processing protein 1 (654 aa).

Its subcellular location is the mitochondrion. In terms of biological role, responsible for conferring a stable 5'-end on cytochrome b mRNA. The protein is Cytochrome B pre-mRNA-processing protein 1 (CBP1) of Saccharomyces cerevisiae (strain ATCC 204508 / S288c) (Baker's yeast).